Here is a 161-residue protein sequence, read N- to C-terminus: Peroxynitrite isomerase (161 aa).

Positions 17–23 match the GXWXGXG motif; that stretch reads GSWVGRG. His-152 is a binding site for heme b.

The protein belongs to the nitrobindin family. In terms of assembly, homodimer. Heme b serves as cofactor.

The catalysed reaction is peroxynitrite = nitrate. It functions in the pathway nitrogen metabolism. Heme-binding protein able to scavenge peroxynitrite and to protect free L-tyrosine against peroxynitrite-mediated nitration, by acting as a peroxynitrite isomerase that converts peroxynitrite to nitrate. Therefore, this protein likely plays a role in peroxynitrite sensing and in the detoxification of reactive nitrogen and oxygen species (RNS and ROS, respectively). Is able to bind nitric oxide (NO) in vitro, but may act as a sensor of peroxynitrite levels in vivo. This chain is Peroxynitrite isomerase, found in Mycobacterium leprae (strain TN).